A 308-amino-acid polypeptide reads, in one-letter code: Porphobilinogen deaminase (308 aa).

An S-(dipyrrolylmethanemethyl)cysteine modification is found at cysteine 240.

This sequence belongs to the HMBS family. As to quaternary structure, monomer. Dipyrromethane serves as cofactor.

It catalyses the reaction 4 porphobilinogen + H2O = hydroxymethylbilane + 4 NH4(+). The protein operates within porphyrin-containing compound metabolism; protoporphyrin-IX biosynthesis; coproporphyrinogen-III from 5-aminolevulinate: step 2/4. Tetrapolymerization of the monopyrrole PBG into the hydroxymethylbilane pre-uroporphyrinogen in several discrete steps. This chain is Porphobilinogen deaminase, found in Campylobacter lari (strain RM2100 / D67 / ATCC BAA-1060).